We begin with the raw amino-acid sequence, 332 residues long: DNA-directed RNA polymerase 2A (332 aa).

Catalysis depends on residues Asp33, Lys108, and Asp265.

This sequence belongs to the phage and mitochondrial RNA polymerase family.

The enzyme catalyses RNA(n) + a ribonucleoside 5'-triphosphate = RNA(n+1) + diphosphate. In terms of biological role, DNA-dependent RNA polymerase catalyzes the transcription of DNA into RNA using the four ribonucleoside triphosphates as substrates. This chain is DNA-directed RNA polymerase 2A (RPOT2-SYL), found in Nicotiana tabacum (Common tobacco).